Consider the following 337-residue polypeptide: DNA-directed RNA polymerase subunit alpha (337 aa).

The segment at Met1–Glu233 is alpha N-terminal domain (alpha-NTD). Positions Phe249 to Tyr337 are alpha C-terminal domain (alpha-CTD).

The protein belongs to the RNA polymerase alpha chain family. In terms of assembly, homodimer. The RNAP catalytic core consists of 2 alpha, 1 beta, 1 beta' and 1 omega subunit. When a sigma factor is associated with the core the holoenzyme is formed, which can initiate transcription.

The enzyme catalyses RNA(n) + a ribonucleoside 5'-triphosphate = RNA(n+1) + diphosphate. In terms of biological role, DNA-dependent RNA polymerase catalyzes the transcription of DNA into RNA using the four ribonucleoside triphosphates as substrates. The protein is DNA-directed RNA polymerase subunit alpha of Brucella melitensis biotype 2 (strain ATCC 23457).